The chain runs to 205 residues: Ribonuclease HII (205 aa).

Residues 22 to 205 form the RNase H type-2 domain; it reads RFICGVDEAG…RKSFLKNILR (184 aa). Residues aspartate 28, glutamate 29, and aspartate 120 each contribute to the a divalent metal cation site.

It belongs to the RNase HII family. Requires Mn(2+) as cofactor. It depends on Mg(2+) as a cofactor.

It is found in the cytoplasm. It catalyses the reaction Endonucleolytic cleavage to 5'-phosphomonoester.. Functionally, endonuclease that specifically degrades the RNA of RNA-DNA hybrids. The chain is Ribonuclease HII from Caldicellulosiruptor saccharolyticus (strain ATCC 43494 / DSM 8903 / Tp8T 6331).